Consider the following 456-residue polypeptide: Probable mannan endo-1,4-beta-mannosidase F (456 aa).

Positions Met-1–Ala-18 are cleaved as a signal peptide. The CBM1 domain maps to Gln-19–Gln-54. Residues Ser-79–Ser-110 form a disordered region. The tract at residues Ser-79–Ser-113 is ser-rich linker. The segment at Phe-114 to Ile-456 is catalytic. The substrate site is built by Trp-166 and Asn-280. The active-site Proton donor is Glu-281. Substrate is bound at residue Tyr-356. Glu-390 (nucleophile) is an active-site residue. Trp-420 contacts substrate.

This sequence belongs to the glycosyl hydrolase 5 (cellulase A) family.

The protein resides in the secreted. The enzyme catalyses Random hydrolysis of (1-&gt;4)-beta-D-mannosidic linkages in mannans, galactomannans and glucomannans.. Its function is as follows. Endo-1,4-mannanase, a crucial enzyme for depolymerization of seed galactomannans and wood galactoglucomannans. The sequence is that of Probable mannan endo-1,4-beta-mannosidase F (manF) from Neosartorya fischeri (strain ATCC 1020 / DSM 3700 / CBS 544.65 / FGSC A1164 / JCM 1740 / NRRL 181 / WB 181) (Aspergillus fischerianus).